The chain runs to 363 residues: Adenosine kinase (363 aa).

Alanine 185, isoleucine 188, and alanine 191 together coordinate Mg(2+). Residue aspartate 318 is part of the active site.

It belongs to the carbohydrate kinase PfkB family. Mg(2+) serves as cofactor.

The catalysed reaction is adenosine + ATP = AMP + ADP + H(+). It participates in purine metabolism; AMP biosynthesis via salvage pathway; AMP from adenosine: step 1/1. In terms of biological role, ATP-dependent phosphorylation of adenosine and other related nucleoside analogs to monophosphate derivatives. It is a key purine metabolic enzyme in the opportunistic parasitic protozoan toxoplasma gondii as it cannot synthesize purines de novo. The polypeptide is Adenosine kinase (AK) (Toxoplasma gondii).